The chain runs to 143 residues: uncharacterized protein (143 aa).

The protein to E.coli YifN.

This is an uncharacterized protein from Haemophilus influenzae (strain ATCC 51907 / DSM 11121 / KW20 / Rd).